Here is a 444-residue protein sequence, read N- to C-terminus: ATPase PAAT (444 aa).

Ser177, Ser182, Ser254, and Ser302 each carry phosphoserine. Positions 424–444 (PSPGMPLRHYDSRERLSNGER) are disordered. Basic and acidic residues predominate over residues 431–444 (RHYDSRERLSNGER).

In terms of assembly, homodimer. Interacts with ABCB7, ABCB8/MITOSUR and ABCB10.

Its subcellular location is the cytoplasm. It localises to the mitochondrion. The enzyme catalyses ATP + H2O = ADP + phosphate + H(+). ATPase that regulates mitochondrial ABC transporters ABCB7, ABCB8/MITOSUR and ABCB10. Regulates mitochondrial ferric concentration and heme biosynthesis and plays a role in the maintenance of mitochondrial homeostasis and cell survival. In Rattus norvegicus (Rat), this protein is ATPase PAAT.